The following is a 231-amino-acid chain: Coproheme decarboxylase (231 aa).

Lys-44 participates in a covalent cross-link: Isoglutamyl lysine isopeptide (Lys-Gln) (interchain with Q-Cter in protein Pup). Residue Tyr-133 is part of the active site. His-156 contacts Fe-coproporphyrin III.

It belongs to the ChdC family. Type 2 subfamily. Fe-coproporphyrin III serves as cofactor.

The catalysed reaction is Fe-coproporphyrin III + 2 H2O2 + 2 H(+) = heme b + 2 CO2 + 4 H2O. It catalyses the reaction Fe-coproporphyrin III + H2O2 + H(+) = harderoheme III + CO2 + 2 H2O. The enzyme catalyses harderoheme III + H2O2 + H(+) = heme b + CO2 + 2 H2O. It functions in the pathway porphyrin-containing compound metabolism; protoheme biosynthesis. Its function is as follows. Involved in coproporphyrin-dependent heme b biosynthesis. Catalyzes the decarboxylation of Fe-coproporphyrin III (coproheme) to heme b (protoheme IX), the last step of the pathway. The reaction occurs in a stepwise manner with a three-propionate intermediate. This chain is Coproheme decarboxylase, found in Mycolicibacterium smegmatis (strain ATCC 700084 / mc(2)155) (Mycobacterium smegmatis).